A 281-amino-acid polypeptide reads, in one-letter code: 4-diphosphocytidyl-2-C-methyl-D-erythritol kinase (281 aa).

Lys15 is an active-site residue. Residue 98 to 108 (PTGAGLGGGSS) participates in ATP binding. Asp140 is a catalytic residue.

Belongs to the GHMP kinase family. IspE subfamily.

The enzyme catalyses 4-CDP-2-C-methyl-D-erythritol + ATP = 4-CDP-2-C-methyl-D-erythritol 2-phosphate + ADP + H(+). It participates in isoprenoid biosynthesis; isopentenyl diphosphate biosynthesis via DXP pathway; isopentenyl diphosphate from 1-deoxy-D-xylulose 5-phosphate: step 3/6. In terms of biological role, catalyzes the phosphorylation of the position 2 hydroxy group of 4-diphosphocytidyl-2C-methyl-D-erythritol. The polypeptide is 4-diphosphocytidyl-2-C-methyl-D-erythritol kinase (Neisseria meningitidis serogroup A / serotype 4A (strain DSM 15465 / Z2491)).